The following is an 80-amino-acid chain: Acyl carrier protein (80 aa).

In terms of domain architecture, Carrier spans 1 to 79 (MSQEEILQKV…DAVKFIEAKK (79 aa)). Serine 39 carries the post-translational modification O-(pantetheine 4'-phosphoryl)serine.

This sequence belongs to the acyl carrier protein (ACP) family. 4'-phosphopantetheine is transferred from CoA to a specific serine of apo-ACP by AcpS. This modification is essential for activity because fatty acids are bound in thioester linkage to the sulfhydryl of the prosthetic group.

The protein localises to the cytoplasm. It participates in lipid metabolism; fatty acid biosynthesis. Its function is as follows. Carrier of the growing fatty acid chain in fatty acid biosynthesis. The sequence is that of Acyl carrier protein from Prochlorococcus marinus (strain MIT 9515).